Here is a 225-residue protein sequence, read N- to C-terminus: GTP cyclohydrolase 1 (225 aa).

Residues 1–12 (MERSKQSHDNQA) show a composition bias toward basic and acidic residues. Residues 1–59 (MERSKQSHDNQADSRPTTNESSLNGHFDGLVKKTPGMWDVKGRGTAGESSSHTGSSVVE) are disordered. Composition is skewed to polar residues over residues 13–24 (DSRPTTNESSLN) and 47–58 (GESSSHTGSSVV). Residues C149, H152, and C220 each contribute to the Zn(2+) site.

Belongs to the GTP cyclohydrolase I family. In terms of assembly, toroid-shaped homodecamer, composed of two pentamers of five dimers.

It localises to the cytoplasm. The protein localises to the nucleus. It catalyses the reaction GTP + H2O = 7,8-dihydroneopterin 3'-triphosphate + formate + H(+). It functions in the pathway cofactor biosynthesis; 7,8-dihydroneopterin triphosphate biosynthesis; 7,8-dihydroneopterin triphosphate from GTP: step 1/1. Its activity is regulated as follows. GTP shows a positive allosteric effect, and tetrahydrobiopterin inhibits the enzyme activity. Zinc is required for catalytic activity. Inhibited by Mg(2+). In terms of biological role, may positively regulate nitric oxide synthesis in endothelial cells. May be involved in dopamine synthesis. May modify pain sensitivity and persistence. In Oncorhynchus mykiss (Rainbow trout), this protein is GTP cyclohydrolase 1 (gch1).